Reading from the N-terminus, the 278-residue chain is Shikimate dehydrogenase (NADP(+)) (278 aa).

Shikimate-binding positions include 19–21 (SRS) and Thr-66. Catalysis depends on Lys-70, which acts as the Proton acceptor. The shikimate site is built by Asn-91 and Asp-106. Residues 129–133 (GAGGA) and Phe-221 each bind NADP(+). Tyr-223 is a binding site for shikimate. Gly-242 is a binding site for NADP(+).

This sequence belongs to the shikimate dehydrogenase family. Homodimer.

It carries out the reaction shikimate + NADP(+) = 3-dehydroshikimate + NADPH + H(+). The protein operates within metabolic intermediate biosynthesis; chorismate biosynthesis; chorismate from D-erythrose 4-phosphate and phosphoenolpyruvate: step 4/7. In terms of biological role, involved in the biosynthesis of the chorismate, which leads to the biosynthesis of aromatic amino acids. Catalyzes the reversible NADPH linked reduction of 3-dehydroshikimate (DHSA) to yield shikimate (SA). This chain is Shikimate dehydrogenase (NADP(+)), found in Anaeromyxobacter dehalogenans (strain 2CP-C).